The sequence spans 201 residues: MAALVLSLLLLSLAGHSSASWCVCKTGLSDTVLQATLDYACGNGADCNPTKPKQSCFNPDNVRSHCNYAVNSFFQKKGQSPGSCNFDGTATPTNSDPSYTGCAFPTSASGSSGSTTVTPGTTNPKGSPTTTTLPGSGTNSPYSGNPTNGVFGGNSTGGTTGTGINPDYTTDSSAFALKNSSKLFICLLLIASSGFCSFLML.

An N-terminal signal peptide occupies residues 1–19; the sequence is MAALVLSLLLLSLAGHSSA. C22 and C84 are oxidised to a cystine. A compositionally biased stretch (low complexity) spans 107-141; sequence SASGSSGSTTVTPGTTNPKGSPTTTTLPGSGTNSP. The disordered stretch occupies residues 107–164; that stretch reads SASGSSGSTTVTPGTTNPKGSPTTTTLPGSGTNSPYSGNPTNGVFGGNSTGGTTGTGI. A compositionally biased stretch (gly residues) spans 150–161; sequence VFGGNSTGGTTG. N-linked (GlcNAc...) asparagine glycosylation is present at N154. S172 is lipidated: GPI-anchor amidated serine. The propeptide at 173–201 is removed in mature form; it reads SAFALKNSSKLFICLLLIASSGFCSFLML. N179 carries N-linked (GlcNAc...) asparagine glycosylation.

In terms of processing, contains two additional disulfide bonds. As to expression, expressed in the shoot apical region and in young leaves but also detected in the laminar and vasculature of mature leaves.

Its subcellular location is the cell membrane. The protein localises to the cell junction. It localises to the plasmodesma. In terms of biological role, able to bind (1-&gt;3)-beta-D-glucans (laminarin). Probably involved in cell-to-cell trafficking regulation. The chain is PLASMODESMATA CALLOSE-BINDING PROTEIN 1 (PDCB1) from Arabidopsis thaliana (Mouse-ear cress).